The following is a 533-amino-acid chain: Beta-1,4 N-acetylgalactosaminyltransferase 1 (533 aa).

Over methionine 1–alanine 7 the chain is Cytoplasmic. A helical; Signal-anchor for type II membrane protein transmembrane segment spans residues leucine 8–serine 25. The Lumenal segment spans residues serine 26–glutamate 533. Asparagine 79, asparagine 179, and asparagine 274 each carry an N-linked (GlcNAc...) asparagine glycan. Cysteine 429 and cysteine 476 are oxidised to a cystine.

Belongs to the glycosyltransferase 2 family. Homodimer; disulfide-linked. As to expression, most abundant in brain, liver, lung, spleen and testis.

It localises to the golgi apparatus membrane. It carries out the reaction a ganglioside GM3 (d18:1(4E)) + UDP-N-acetyl-alpha-D-galactosamine = a ganglioside GM2 (d18:1(4E)) + UDP + H(+). It catalyses the reaction a ganglioside GD3 (d18:1(4E)) + UDP-N-acetyl-alpha-D-galactosamine = a ganglioside GD2 (d18:1(4E)) + UDP + H(+). The catalysed reaction is a ganglioside GM3 + UDP-N-acetyl-alpha-D-galactosamine = a ganglioside GM2 + UDP + H(+). The enzyme catalyses a ganglioside GD3 + UDP-N-acetyl-alpha-D-galactosamine = a ganglioside GD2 + UDP + H(+). It carries out the reaction a ganglioside GD1a + UDP-N-acetyl-alpha-D-galactosamine = a ganglioside GalNAc-GD1a + UDP + H(+). It catalyses the reaction a ganglioside GT3 (d18:1(4E)) + UDP-N-acetyl-alpha-D-galactosamine = a ganglioside GT2 (d18:1(4E)) + UDP + H(+). The catalysed reaction is a beta-D-Gal-(1-&gt;4)-beta-D-Glc-(1&lt;-&gt;1)-Cer(d18:1(4E)) + UDP-N-acetyl-alpha-D-galactosamine = a ganglioside GA2 (d18:1(4E)) + UDP + H(+). The enzyme catalyses a neolactoside IV(3)-alpha-NeuGc-nLc4Cer + UDP-N-acetyl-alpha-D-galactosamine = a neolactoside IV(4)-beta-GalNAc-IV(3)-alpha-NeuGc-nLc4Cer + UDP + H(+). Its pathway is sphingolipid metabolism. In terms of biological role, involved in the biosynthesis of gangliosides GM2, GD2 and GA2. Its function is as follows. Involved in the biosynthesis of gangliosides GM2, GD2, GT2 and GA2 from GM3, GD3, GT3 and GA3, respectively. The protein is Beta-1,4 N-acetylgalactosaminyltransferase 1 of Mus musculus (Mouse).